Consider the following 84-residue polypeptide: MSEVKRTQQGRVVSDKMDKSITVAIERFVKHPIYGKFVKRTTKVHAHDENNECGIGDTVEIAECRPLSKTKSWTLVKVVEKAKM.

This sequence belongs to the universal ribosomal protein uS17 family. As to quaternary structure, part of the 30S ribosomal subunit.

In terms of biological role, one of the primary rRNA binding proteins, it binds specifically to the 5'-end of 16S ribosomal RNA. In Vibrio parahaemolyticus serotype O3:K6 (strain RIMD 2210633), this protein is Small ribosomal subunit protein uS17.